The primary structure comprises 494 residues: Cytochrome P450 2A11 (494 aa).

An N6-acetyllysine modification is found at lysine 379. Cysteine 439 contacts heme.

The protein belongs to the cytochrome P450 family. It depends on heme as a cofactor. In terms of tissue distribution, expressed in liver and lung as well as in nasal tissues.

It is found in the endoplasmic reticulum membrane. The protein localises to the microsome membrane. The catalysed reaction is an organic molecule + reduced [NADPH--hemoprotein reductase] + O2 = an alcohol + oxidized [NADPH--hemoprotein reductase] + H2O + H(+). Catalyzes the oxygenation of a variety of substrates, including ethanol and procarcinogens such as N-nitrosodiethylamine and phenacetin. Has no or little activity as a coumarin 7-hydroxylase and in the formation of androstenedione from testosterone. In Oryctolagus cuniculus (Rabbit), this protein is Cytochrome P450 2A11 (CYP2A11).